The primary structure comprises 326 residues: Tetraacyldisaccharide 4'-kinase (326 aa).

55–62 (TAGGNGKT) is a binding site for ATP.

It belongs to the LpxK family.

It carries out the reaction a lipid A disaccharide + ATP = a lipid IVA + ADP + H(+). The protein operates within glycolipid biosynthesis; lipid IV(A) biosynthesis; lipid IV(A) from (3R)-3-hydroxytetradecanoyl-[acyl-carrier-protein] and UDP-N-acetyl-alpha-D-glucosamine: step 6/6. Its function is as follows. Transfers the gamma-phosphate of ATP to the 4'-position of a tetraacyldisaccharide 1-phosphate intermediate (termed DS-1-P) to form tetraacyldisaccharide 1,4'-bis-phosphate (lipid IVA). In Serratia proteamaculans (strain 568), this protein is Tetraacyldisaccharide 4'-kinase.